Consider the following 546-residue polypeptide: Histidine--tRNA ligase, mitochondrial (546 aa).

Residues Met-1–Arg-20 constitute a mitochondrion transit peptide. L-histidine is bound by residues Asp-129 to Thr-131, Arg-156, Gln-172, Asp-176, Arg-326, and Tyr-330 to Tyr-331.

The protein belongs to the class-II aminoacyl-tRNA synthetase family.

The protein localises to the cytoplasm. It localises to the mitochondrion. It catalyses the reaction tRNA(His) + L-histidine + ATP = L-histidyl-tRNA(His) + AMP + diphosphate + H(+). Functionally, catalyzes the aminoacylation of histidyl-tRNA in both the cytoplasm and the mitochondrion. The sequence is that of Histidine--tRNA ligase, mitochondrial (HTS1) from Saccharomyces cerevisiae (strain ATCC 204508 / S288c) (Baker's yeast).